The following is a 198-amino-acid chain: Acireductone dioxygenase (198 aa).

Positions 97, 99, 103, and 141 each coordinate Fe(2+). Positions 97, 99, 103, and 141 each coordinate Ni(2+).

This sequence belongs to the acireductone dioxygenase (ARD) family. As to quaternary structure, monomer. The cofactor is Fe(2+). Requires Ni(2+) as cofactor.

It catalyses the reaction 1,2-dihydroxy-5-(methylsulfanyl)pent-1-en-3-one + O2 = 3-(methylsulfanyl)propanoate + CO + formate + 2 H(+). The enzyme catalyses 1,2-dihydroxy-5-(methylsulfanyl)pent-1-en-3-one + O2 = 4-methylsulfanyl-2-oxobutanoate + formate + 2 H(+). It functions in the pathway amino-acid biosynthesis; L-methionine biosynthesis via salvage pathway; L-methionine from S-methyl-5-thio-alpha-D-ribose 1-phosphate: step 5/6. In terms of biological role, catalyzes 2 different reactions between oxygen and the acireductone 1,2-dihydroxy-3-keto-5-methylthiopentene (DHK-MTPene) depending upon the metal bound in the active site. Fe-containing acireductone dioxygenase (Fe-ARD) produces formate and 2-keto-4-methylthiobutyrate (KMTB), the alpha-ketoacid precursor of methionine in the methionine recycle pathway. Ni-containing acireductone dioxygenase (Ni-ARD) produces methylthiopropionate, carbon monoxide and formate, and does not lie on the methionine recycle pathway. This chain is Acireductone dioxygenase, found in Synechococcus elongatus (strain ATCC 33912 / PCC 7942 / FACHB-805) (Anacystis nidulans R2).